Consider the following 334-residue polypeptide: Phosphate acyltransferase (334 aa).

It belongs to the PlsX family. In terms of assembly, homodimer. Probably interacts with PlsY.

It is found in the cytoplasm. The catalysed reaction is a fatty acyl-[ACP] + phosphate = an acyl phosphate + holo-[ACP]. It participates in lipid metabolism; phospholipid metabolism. Catalyzes the reversible formation of acyl-phosphate (acyl-PO(4)) from acyl-[acyl-carrier-protein] (acyl-ACP). This enzyme utilizes acyl-ACP as fatty acyl donor, but not acyl-CoA. This chain is Phosphate acyltransferase, found in Fervidobacterium nodosum (strain ATCC 35602 / DSM 5306 / Rt17-B1).